Here is a 191-residue protein sequence, read N- to C-terminus: Orotate phosphoribosyltransferase (191 aa).

A 5-phospho-alpha-D-ribose 1-diphosphate-binding site is contributed by 116 to 124 (EDVVTTGGS). Residues threonine 120 and arginine 148 each contribute to the orotate site.

The protein belongs to the purine/pyrimidine phosphoribosyltransferase family. PyrE subfamily. Homodimer. Mg(2+) serves as cofactor.

The catalysed reaction is orotidine 5'-phosphate + diphosphate = orotate + 5-phospho-alpha-D-ribose 1-diphosphate. Its pathway is pyrimidine metabolism; UMP biosynthesis via de novo pathway; UMP from orotate: step 1/2. Catalyzes the transfer of a ribosyl phosphate group from 5-phosphoribose 1-diphosphate to orotate, leading to the formation of orotidine monophosphate (OMP). The polypeptide is Orotate phosphoribosyltransferase (Heliobacterium modesticaldum (strain ATCC 51547 / Ice1)).